Reading from the N-terminus, the 543-residue chain is Ribonuclease Y (543 aa).

Residues 4-24 (IIMIPVATAIVSLLVGTVIGY) form a helical membrane-spanning segment. Residues 233 to 296 (TVSVVDLPNE…EIAKRAMERL (64 aa)) form the KH domain. An HD domain is found at 359–452 (VLSHSIEVGK…VVAADTISSA (94 aa)).

The protein belongs to the RNase Y family.

Its subcellular location is the cell membrane. Functionally, endoribonuclease that initiates mRNA decay. The chain is Ribonuclease Y from Lactobacillus helveticus (strain DPC 4571).